Reading from the N-terminus, the 248-residue chain is UPF0246 protein RF_0769 (248 aa).

It belongs to the UPF0246 family.

This chain is UPF0246 protein RF_0769, found in Rickettsia felis (strain ATCC VR-1525 / URRWXCal2) (Rickettsia azadi).